Consider the following 348-residue polypeptide: Gamma-glutamyl hydrolase 1 (348 aa).

The signal sequence occupies residues 1 to 23; that stretch reads MIDNNCLYKEELNRNSYSGLAKE. The 297-residue stretch at 46–342 folds into the Gamma-glutamyl hydrolase domain; it reads SPDPNLNYRP…RGYDEVYIFT (297 aa). Cys156 (nucleophile) is an active-site residue. The active site involves His269.

This sequence belongs to the peptidase C26 family. As to expression, highly expressed in roots and at lower levels in leaves, stems and siliques.

Its subcellular location is the vacuole. The protein resides in the secreted. It localises to the extracellular space. It is found in the cell wall. The catalysed reaction is (6S)-5,6,7,8-tetrahydrofolyl-(gamma-L-Glu)(n) + (n-1) H2O = (6S)-5,6,7,8-tetrahydrofolate + (n-1) L-glutamate. Its function is as follows. Cleaves the polyglutamate sidechains of folate polyglutamates in the vacuole. Is important for polyglutamyl tail length determination before vacuolar exit. Plays a role in folate stability and intracellular folate content. In Arabidopsis thaliana (Mouse-ear cress), this protein is Gamma-glutamyl hydrolase 1 (GGH1).